A 286-amino-acid chain; its full sequence is Formamidopyrimidine-DNA glycosylase (286 aa).

Catalysis depends on P2, which acts as the Schiff-base intermediate with DNA. E3 acts as the Proton donor in catalysis. K61 acts as the Proton donor; for beta-elimination activity in catalysis. Residues H103, R122, and R164 each coordinate DNA. The FPG-type zinc finger occupies N250 to K284. The active-site Proton donor; for delta-elimination activity is R274.

This sequence belongs to the FPG family. In terms of assembly, monomer. Requires Zn(2+) as cofactor.

The enzyme catalyses Hydrolysis of DNA containing ring-opened 7-methylguanine residues, releasing 2,6-diamino-4-hydroxy-5-(N-methyl)formamidopyrimidine.. It carries out the reaction 2'-deoxyribonucleotide-(2'-deoxyribose 5'-phosphate)-2'-deoxyribonucleotide-DNA = a 3'-end 2'-deoxyribonucleotide-(2,3-dehydro-2,3-deoxyribose 5'-phosphate)-DNA + a 5'-end 5'-phospho-2'-deoxyribonucleoside-DNA + H(+). Functionally, involved in base excision repair of DNA damaged by oxidation or by mutagenic agents. Acts as a DNA glycosylase that recognizes and removes damaged bases. Has a preference for oxidized purines, such as 7,8-dihydro-8-oxoguanine (8-oxoG). Has AP (apurinic/apyrimidinic) lyase activity and introduces nicks in the DNA strand. Cleaves the DNA backbone by beta-delta elimination to generate a single-strand break at the site of the removed base with both 3'- and 5'-phosphates. The sequence is that of Formamidopyrimidine-DNA glycosylase from Corynebacterium glutamicum (strain ATCC 13032 / DSM 20300 / JCM 1318 / BCRC 11384 / CCUG 27702 / LMG 3730 / NBRC 12168 / NCIMB 10025 / NRRL B-2784 / 534).